Consider the following 341-residue polypeptide: Small ribosomal subunit biogenesis GTPase RsgA (341 aa).

The 157-residue stretch at 112-268 (RQQLIAANLD…LIDTPGMREL (157 aa)) folds into the CP-type G domain. Residues 157–160 (TKVD) and 210–218 (GSSGAGKST) contribute to the GTP site. Zn(2+) is bound by residues Cys-290, Cys-295, His-297, and Cys-303.

It belongs to the TRAFAC class YlqF/YawG GTPase family. RsgA subfamily. Monomer. Associates with 30S ribosomal subunit, binds 16S rRNA. It depends on Zn(2+) as a cofactor.

It is found in the cytoplasm. In terms of biological role, one of several proteins that assist in the late maturation steps of the functional core of the 30S ribosomal subunit. Helps release RbfA from mature subunits. May play a role in the assembly of ribosomal proteins into the subunit. Circularly permuted GTPase that catalyzes slow GTP hydrolysis, GTPase activity is stimulated by the 30S ribosomal subunit. In Xylella fastidiosa (strain Temecula1 / ATCC 700964), this protein is Small ribosomal subunit biogenesis GTPase RsgA.